The following is a 163-amino-acid chain: Phosphopantetheine adenylyltransferase (163 aa).

Residue threonine 9 coordinates substrate. ATP is bound by residues 9–10 (TF) and histidine 17. Substrate contacts are provided by lysine 41, leucine 76, and arginine 90. ATP contacts are provided by residues 91–93 (GLR), glutamate 101, and 126–132 (HQAIASR).

The protein belongs to the bacterial CoaD family. Homohexamer. Requires Mg(2+) as cofactor.

It is found in the cytoplasm. The enzyme catalyses (R)-4'-phosphopantetheine + ATP + H(+) = 3'-dephospho-CoA + diphosphate. It participates in cofactor biosynthesis; coenzyme A biosynthesis; CoA from (R)-pantothenate: step 4/5. Reversibly transfers an adenylyl group from ATP to 4'-phosphopantetheine, yielding dephospho-CoA (dPCoA) and pyrophosphate. The polypeptide is Phosphopantetheine adenylyltransferase (Caulobacter vibrioides (strain ATCC 19089 / CIP 103742 / CB 15) (Caulobacter crescentus)).